Consider the following 110-residue polypeptide: MRQVTIPLIQSKSMFCVIYRSSKRDQTYLYVEKKDDFSQVPEALMKGFGQPQLAMMLPLDGRKKLVNAELEKVKQALSEQGYYLQLPPPPEDLLKQHLSSVGQNTSPADR.

One can recognise a YcgL domain in the interval 14–98 (MFCVIYRSSK…PPEDLLKQHL (85 aa)). Residues 88–110 (PPPEDLLKQHLSSVGQNTSPADR) are disordered. The segment covering 97 to 110 (HLSSVGQNTSPADR) has biased composition (polar residues).

The polypeptide is Protein YcgL (Salmonella paratyphi A (strain ATCC 9150 / SARB42)).